We begin with the raw amino-acid sequence, 277 residues long: Release factor glutamine methyltransferase (277 aa).

Residues 119–123, Asp142, Trp170, and Asn184 each bind S-adenosyl-L-methionine; that span reads GTGCG. 184–187 provides a ligand contact to substrate; that stretch reads NPPY.

This sequence belongs to the protein N5-glutamine methyltransferase family. PrmC subfamily.

It catalyses the reaction L-glutaminyl-[peptide chain release factor] + S-adenosyl-L-methionine = N(5)-methyl-L-glutaminyl-[peptide chain release factor] + S-adenosyl-L-homocysteine + H(+). In terms of biological role, methylates the class 1 translation termination release factors RF1/PrfA and RF2/PrfB on the glutamine residue of the universally conserved GGQ motif. The chain is Release factor glutamine methyltransferase from Buchnera aphidicola subsp. Baizongia pistaciae (strain Bp).